The chain runs to 416 residues: (S)-ureidoglycine--glyoxylate transaminase (416 aa).

Position 198 is an N6-(pyridoxal phosphate)lysine (Lys-198).

It belongs to the class-V pyridoxal-phosphate-dependent aminotransferase family. Homodimer. It depends on pyridoxal 5'-phosphate as a cofactor.

It carries out the reaction (S)-2-ureidoglycine + glyoxylate = N-carbamoyl-2-oxoglycine + glycine. Its pathway is nitrogen metabolism; (S)-allantoin degradation. Its function is as follows. Catalyzes the transamination between an unstable intermediate ((S)-ureidoglycine) and the end product of purine catabolism (glyoxylate) to yield oxalurate and glycine. Glyoxylate is the preferred substrate, but other amino-group acceptors can be used. The chain is (S)-ureidoglycine--glyoxylate transaminase from Bacillus subtilis (strain 168).